The sequence spans 90 residues: Probable Fe(2+)-trafficking protein (90 aa).

This sequence belongs to the Fe(2+)-trafficking protein family.

In terms of biological role, could be a mediator in iron transactions between iron acquisition and iron-requiring processes, such as synthesis and/or repair of Fe-S clusters in biosynthetic enzymes. The protein is Probable Fe(2+)-trafficking protein of Acinetobacter baylyi (strain ATCC 33305 / BD413 / ADP1).